Here is a 434-residue protein sequence, read N- to C-terminus: Asparagine--tRNA ligase (434 aa).

Belongs to the class-II aminoacyl-tRNA synthetase family. In terms of assembly, homodimer.

The protein localises to the cytoplasm. The catalysed reaction is tRNA(Asn) + L-asparagine + ATP = L-asparaginyl-tRNA(Asn) + AMP + diphosphate + H(+). This Oenococcus oeni (strain ATCC BAA-331 / PSU-1) protein is Asparagine--tRNA ligase.